The primary structure comprises 449 residues: MYHLWIKCLAAWIFLKRFNGVHVMHAKAPMYPNEPFLVFWNAPTTQCRLRYKVDLDLKTFHIVANANDTLSGSAVTIFYPTHLGIYPHIDDRGHFFHGIIPQNESLTKHLDKSKSDINRIIPLKTFHGLGVIDWENWRPQWDRNWGNKNVYRNRSIQFARDLHPELSENKIRRLAKAEYEKAAKSFMRDTLLLAEEMRPDGYWGYYLYPDCQNYDYKTKGDQYTGKCPDIEMSRNDQLLWLWRESTALFPNVYLEIILRSSDNALKFVHHRLKESMRIASMAREDYALPVFVYARPFYAYTFEPLTQEDLVTTVGETAAMGAAGIVFWGSMQYASTVDSCQKVKKYMNGPLGRYIINVTTAAKICSHALCRKNGRCVRKHSDSNAFLHLFPESFRIMVHANATEKKVIVKGKLELENLIYLRENFMCQCYQGWQGLYCEEYSIKDIRKI.

Positions 1–23 (MYHLWIKCLAAWIFLKRFNGVHV) are cleaved as a signal peptide. Intrachain disulfides connect Cys47–Cys340 and Cys211–Cys227. N-linked (GlcNAc...) asparagine glycosylation is found at Asn67 and Asn103. Glu135 (proton donor) is an active-site residue. A glycan (N-linked (GlcNAc...) asparagine) is linked at Asn153. Residue Asn357 is glycosylated (N-linked (GlcNAc...) asparagine). 3 cysteine pairs are disulfide-bonded: Cys365-Cys376, Cys370-Cys427, and Cys429-Cys438. An N-linked (GlcNAc...) asparagine glycan is attached at Asn401. Residues 427–438 (CQCYQGWQGLYC) enclose the EGF-like domain.

This sequence belongs to the glycosyl hydrolase 56 family. Monomer. In terms of tissue distribution, expressed by the venom gland.

It is found in the secreted. The catalysed reaction is Random hydrolysis of (1-&gt;4)-linkages between N-acetyl-beta-D-glucosamine and D-glucuronate residues in hyaluronate.. Snake venom endo-hyaluronidase that degrades hyaluronan to smaller oligosaccharide fragments. In venom, it is not toxic by itself, but increases the diffusion of other venom proteins by degrading the extracellular matrix. In addition, it displays antiedematogenic activity. This chain is Hyaluronidase, found in Echis ocellatus (Ocellated saw-scaled viper).